Reading from the N-terminus, the 175-residue chain is Receptor activity-modifying protein 2 (175 aa).

Positions 1–42 (MASLRVERAGGPRLPRTRVGRPAALRLLLLLGAVLNPHEALA) are cleaved as a signal peptide. Over 43-143 (QPLPTTGTPG…VQPTFSDPPE (101 aa)) the chain is Extracellular. 2 cysteine pairs are disulfide-bonded: C68/C99 and C84/C131. N130 is a glycosylation site (N-linked (GlcNAc...) asparagine). Residues 144–165 (DVLLAMIIAPICLIPFLITLVV) form a helical membrane-spanning segment. The Cytoplasmic portion of the chain corresponds to 166–175 (WRSKDSEAQA).

This sequence belongs to the RAMP family. As to quaternary structure, heterodimer of CALCRL and RAMP2; the interaction forms the receptor complex for adrenomedullin/ADM. Heterodimer of CALCR and RAMP2; interaction forms the AMYR2 receptor complex for calcitonin/CALC and amylin/IAPP. As to expression, strongly expressed in lung, breast, immune system and fetal tissues.

The protein localises to the cell membrane. Its function is as follows. Accessory protein that interacts with and modulates the function of G-protein coupled receptors including calcitonin gene-related peptide type 1 receptor (CALCRL) and calcitonin receptor (CALCR). Required for the transport of CALCRL to the plasma membrane. Together with CALCRL, form a receptor complex for adrenomedullin/ADM. Together with CALCR, act as a receptor complex for calcitonin/CT/CALC. Together with CALCR, also act as a receptor complex for amylin/IAPP. The sequence is that of Receptor activity-modifying protein 2 from Homo sapiens (Human).